Here is a 96-residue protein sequence, read N- to C-terminus: Neurotoxin beta-KTx 31.1 (96 aa).

Residues 1-21 (MQAKRTILLLLLLGMVALSSC) form the signal peptide. Positions 22 to 29 (GLREKHVQ) are excised as a propeptide. The 38-residue stretch at 56–93 (QYGCPIIKDYCSFHCNDLEKHEGYCHGTKCKCNIPNQY) folds into the BetaSPN-type CS-alpha/beta domain. Intrachain disulfides connect Cys-59–Cys-80, Cys-66–Cys-85, and Cys-70–Cys-87.

It belongs to the long chain scorpion toxin family. Class 1 subfamily. In terms of tissue distribution, expressed by the venom gland.

It is found in the secreted. Functionally, inhibits voltage-gated potassium channel. The sequence is that of Neurotoxin beta-KTx 31.1 from Lychas mucronatus (Chinese swimming scorpion).